A 248-amino-acid chain; its full sequence is MSGHSKWATTKHKKAVIDARRGKLFAKLIKNIEVAARVGGPDPNGNPTLADAIAKARDQSVPNDNIERAIRRGAGLEAGGTDWEPIIYEGYGPGGVALLIECLTDNRNRAASEVRTTMTRNGGSMADPGSVAYLFNRKGIVIVPKEGRSEDDVLAAVLDAGAEEVNDLGESFEVVSEPGDLTRVRDALSAAGIRYESADVAWQPTVNVPLDDDTARKVLRLIEALEDCDDVQAVWANFDISDAVLAEV.

Belongs to the TACO1 family.

It localises to the cytoplasm. This chain is Probable transcriptional regulatory protein Acel_1346, found in Acidothermus cellulolyticus (strain ATCC 43068 / DSM 8971 / 11B).